Reading from the N-terminus, the 199-residue chain is Octanoyltransferase (199 aa).

In terms of domain architecture, BPL/LPL catalytic spans 27-199 (SNSYDELWLL…FVQYFLTQFK (173 aa)). Residues 66 to 73 (RGGQVTYH), 133 to 135 (SIG), and 146 to 148 (GIA) contribute to the substrate site. The Acyl-thioester intermediate role is filled by C164.

The protein belongs to the LipB family.

The protein resides in the cytoplasm. It carries out the reaction octanoyl-[ACP] + L-lysyl-[protein] = N(6)-octanoyl-L-lysyl-[protein] + holo-[ACP] + H(+). It functions in the pathway protein modification; protein lipoylation via endogenous pathway; protein N(6)-(lipoyl)lysine from octanoyl-[acyl-carrier-protein]: step 1/2. Functionally, catalyzes the transfer of endogenously produced octanoic acid from octanoyl-acyl-carrier-protein onto the lipoyl domains of lipoate-dependent enzymes. Lipoyl-ACP can also act as a substrate although octanoyl-ACP is likely to be the physiological substrate. The polypeptide is Octanoyltransferase (Legionella pneumophila (strain Lens)).